Reading from the N-terminus, the 5099-residue chain is Malformin synthetase mlfA (5099 aa).

The segment at 224-615 (QRHAADRPHS…CGRADTQVKL (392 aa)) is adenylation 1. One can recognise a Carrier 1 domain in the interval 756–829 (THLENEIQLA…EAASLAKVRD (74 aa)). Ser790 bears the O-(pantetheine 4'-phosphoryl)serine mark. The interval 867 to 1297 (EDVFPCTSMQ…PVDSLTLLKP (431 aa)) is condensation 1. The interval 1325–1717 (DRWVNRQPDT…GRKDTQVKLR (393 aa)) is adenylation 2. Residues 1857 to 1934 (ARAPELERTL…QIATQCEGIA (78 aa)) form the Carrier 2 domain. Ser1894 bears the O-(pantetheine 4'-phosphoryl)serine mark. Residues 1995–2040 (MQQESSSSPAPSVSSSSSSSSAPKPLLAQPEPPTNLRDSVPEPFSL) are disordered. The segment covering 1999–2017 (SSSSPAPSVSSSSSSSSAP) has biased composition (low complexity). A condensation 2 region spans residues 2067–2482 (EDIYPATPLQ…ALSPGDKKVL (416 aa)). The adenylation 3 stretch occupies residues 2505–2897 (LSTPHAPAVC…VGRKDGQLKL (393 aa)). Residues 3032–3108 (RPATAQERGL…RLVLHLQNTS (77 aa)) enclose the Carrier 3 domain. The residue at position 3069 (Ser3069) is an O-(pantetheine 4'-phosphoryl)serine. Condensation regions lie at residues 3125–3589 (WVHL…TYDQ) and 3610–4033 (DIYP…QQAM). Residues 4058-4446 (YANREAVCAW…VGRKDSQIKF (389 aa)) form an adenylation 4 region. In terms of domain architecture, Carrier 4 spans 4581–4657 (PPSTGMQQGI…DLAEHISSRV (77 aa)). At Ser4618 the chain carries O-(pantetheine 4'-phosphoryl)serine. The condensation 5 stretch occupies residues 4696 to 5017 (DILPTTGFQR…LQTVVQHQNV (322 aa)).

The protein belongs to the NRP synthetase family.

Its pathway is secondary metabolite biosynthesis. Its function is as follows. Nonribosomal peptide synthetase; part of the gene cluster that mediates the biosynthesis of malformins, cyclic pentapeptides with a disulfide bond between 2 consecutive cysteins, that show potential anti-tumor as well as antimalarial and antitrypanosomal properties. The nonribosomal peptide synthetase mlfA is responsible of the formation of the cyclic pentapeptide. The malformin biosynthesis clusters in malformin-producing fungi also contain enzymes involved in the formation of the disulfide bond between the two consecutive cysteins within malformins, in addition to additional tailoring enzymes such as methyltransferases or oxidoreductases. They are also composed of up to 4 major facilitator superfamily transporters, and transcription factors probably involved in the regulation of the expression of those clusters. In Aspergillus sclerotiicarbonarius (strain CBS 121057 / IBT 28362), this protein is Malformin synthetase mlfA.